Here is a 120-residue protein sequence, read N- to C-terminus: Large ribosomal subunit protein uL22 (120 aa).

Belongs to the universal ribosomal protein uL22 family. Part of the 50S ribosomal subunit.

This protein binds specifically to 23S rRNA; its binding is stimulated by other ribosomal proteins, e.g. L4, L17, and L20. It is important during the early stages of 50S assembly. It makes multiple contacts with different domains of the 23S rRNA in the assembled 50S subunit and ribosome. Functionally, the globular domain of the protein is located near the polypeptide exit tunnel on the outside of the subunit, while an extended beta-hairpin is found that lines the wall of the exit tunnel in the center of the 70S ribosome. This is Large ribosomal subunit protein uL22 from Acaryochloris marina (strain MBIC 11017).